Reading from the N-terminus, the 372-residue chain is Glutamate 5-kinase (372 aa).

An ATP-binding site is contributed by Lys-14. The substrate site is built by Ser-54, Asp-141, and Asn-153. 173-174 serves as a coordination point for ATP; that stretch reads TD. A PUA domain is found at 280–358; it reads RGTLVLDDGA…DAIESLLGYS (79 aa).

This sequence belongs to the glutamate 5-kinase family.

The protein localises to the cytoplasm. The enzyme catalyses L-glutamate + ATP = L-glutamyl 5-phosphate + ADP. It participates in amino-acid biosynthesis; L-proline biosynthesis; L-glutamate 5-semialdehyde from L-glutamate: step 1/2. In terms of biological role, catalyzes the transfer of a phosphate group to glutamate to form L-glutamate 5-phosphate. The protein is Glutamate 5-kinase of Pseudomonas entomophila (strain L48).